The primary structure comprises 267 residues: 5'-nucleotidase SurE (267 aa).

Residues aspartate 9, aspartate 10, serine 41, and asparagine 95 each coordinate a divalent metal cation.

This sequence belongs to the SurE nucleotidase family. Requires a divalent metal cation as cofactor.

It localises to the cytoplasm. It carries out the reaction a ribonucleoside 5'-phosphate + H2O = a ribonucleoside + phosphate. Nucleotidase that shows phosphatase activity on nucleoside 5'-monophosphates. The chain is 5'-nucleotidase SurE from Aeropyrum pernix (strain ATCC 700893 / DSM 11879 / JCM 9820 / NBRC 100138 / K1).